Reading from the N-terminus, the 277-residue chain is Protein HEAT-INDUCED TAS1 TARGET 1 (277 aa).

It belongs to the heat induced plant HTT protein family. As to quaternary structure, interacts with the heat shock proteins HSP70-14 and At2g33735/HSP40, and with NFYC2 in both cytoplasm and nucleus. As to expression, expressed ubiquitously, including in seedlings, leaves, stems, inflorescences and siliques.

The protein localises to the cytoplasm. Its subcellular location is the nucleus. Its function is as follows. Mediates both basal and acquired thermotolerance via HSFA1s-directed pathways (e.g. HSFA1A, HSFA1B, and HSFA1D). Triggers the expression of HSFA1A and HSFA1B. This chain is Protein HEAT-INDUCED TAS1 TARGET 1, found in Arabidopsis thaliana (Mouse-ear cress).